We begin with the raw amino-acid sequence, 150 residues long: SsrA-binding protein (150 aa).

The interval 127 to 150 is disordered; sequence KRETEKQRDWQREKARIMKGDAKD.

It belongs to the SmpB family.

It is found in the cytoplasm. Its function is as follows. Required for rescue of stalled ribosomes mediated by trans-translation. Binds to transfer-messenger RNA (tmRNA), required for stable association of tmRNA with ribosomes. tmRNA and SmpB together mimic tRNA shape, replacing the anticodon stem-loop with SmpB. tmRNA is encoded by the ssrA gene; the 2 termini fold to resemble tRNA(Ala) and it encodes a 'tag peptide', a short internal open reading frame. During trans-translation Ala-aminoacylated tmRNA acts like a tRNA, entering the A-site of stalled ribosomes, displacing the stalled mRNA. The ribosome then switches to translate the ORF on the tmRNA; the nascent peptide is terminated with the 'tag peptide' encoded by the tmRNA and targeted for degradation. The ribosome is freed to recommence translation, which seems to be the essential function of trans-translation. The protein is SsrA-binding protein of Cupriavidus necator (strain ATCC 17699 / DSM 428 / KCTC 22496 / NCIMB 10442 / H16 / Stanier 337) (Ralstonia eutropha).